The primary structure comprises 267 residues: Undecaprenyl-diphosphatase (267 aa).

7 consecutive transmembrane segments (helical) span residues 1-21 (MSLF…FLPI), 40-60 (GQAI…LYFW), 85-105 (LAFL…FLEV), 112-132 (LRSI…LYWA), 189-209 (AMLM…AEVI), 219-239 (DGAI…TLMF), and 245-265 (VSFT…LVIA).

This sequence belongs to the UppP family.

Its subcellular location is the cell inner membrane. It carries out the reaction di-trans,octa-cis-undecaprenyl diphosphate + H2O = di-trans,octa-cis-undecaprenyl phosphate + phosphate + H(+). In terms of biological role, catalyzes the dephosphorylation of undecaprenyl diphosphate (UPP). Confers resistance to bacitracin. The protein is Undecaprenyl-diphosphatase of Jannaschia sp. (strain CCS1).